The sequence spans 158 residues: Large ribosomal subunit protein uL11 (158 aa).

This sequence belongs to the universal ribosomal protein uL11 family. As to quaternary structure, part of the ribosomal stalk of the 50S ribosomal subunit. Interacts with L10 and the large rRNA to form the base of the stalk. L10 forms an elongated spine to which L12 dimers bind in a sequential fashion forming a multimeric L10(L12)X complex.

Forms part of the ribosomal stalk which helps the ribosome interact with GTP-bound translation factors. The protein is Large ribosomal subunit protein uL11 of Methanospirillum hungatei JF-1 (strain ATCC 27890 / DSM 864 / NBRC 100397 / JF-1).